A 148-amino-acid chain; its full sequence is D-aminoacyl-tRNA deacylase (148 aa).

The short motif at 136-137 is the Gly-cisPro motif, important for rejection of L-amino acids element; it reads GP.

It belongs to the DTD family. In terms of assembly, homodimer.

Its subcellular location is the cytoplasm. It catalyses the reaction glycyl-tRNA(Ala) + H2O = tRNA(Ala) + glycine + H(+). The enzyme catalyses a D-aminoacyl-tRNA + H2O = a tRNA + a D-alpha-amino acid + H(+). An aminoacyl-tRNA editing enzyme that deacylates mischarged D-aminoacyl-tRNAs. Also deacylates mischarged glycyl-tRNA(Ala), protecting cells against glycine mischarging by AlaRS. Acts via tRNA-based rather than protein-based catalysis; rejects L-amino acids rather than detecting D-amino acids in the active site. By recycling D-aminoacyl-tRNA to D-amino acids and free tRNA molecules, this enzyme counteracts the toxicity associated with the formation of D-aminoacyl-tRNA entities in vivo and helps enforce protein L-homochirality. The chain is D-aminoacyl-tRNA deacylase from Kosmotoga olearia (strain ATCC BAA-1733 / DSM 21960 / TBF 19.5.1).